Reading from the N-terminus, the 75-residue chain is Exodeoxyribonuclease 7 small subunit (75 aa).

Belongs to the XseB family. Heterooligomer composed of large and small subunits.

The protein localises to the cytoplasm. The catalysed reaction is Exonucleolytic cleavage in either 5'- to 3'- or 3'- to 5'-direction to yield nucleoside 5'-phosphates.. Its function is as follows. Bidirectionally degrades single-stranded DNA into large acid-insoluble oligonucleotides, which are then degraded further into small acid-soluble oligonucleotides. The sequence is that of Exodeoxyribonuclease 7 small subunit from Chlamydia caviae (strain ATCC VR-813 / DSM 19441 / 03DC25 / GPIC) (Chlamydophila caviae).